The sequence spans 327 residues: Probable cytosolic iron-sulfur protein assembly protein CIAO1 homolog (327 aa).

WD repeat units follow at residues 3-42 (GHED…WICK), 48-87 (GHQR…FECN), 92-131 (GHEN…EYEC), 137-176 (SHTQ…WSCC), 181-220 (GHES…NQEG), 239-278 (YHDR…DRNQ), and 290-327 (AHSM…PAEE).

It belongs to the WD repeat CIA1 family.

Essential component of the cytosolic iron-sulfur (Fe/S) protein assembly machinery. Required for the maturation of extramitochondrial Fe/S proteins. The chain is Probable cytosolic iron-sulfur protein assembly protein CIAO1 homolog from Nematostella vectensis (Starlet sea anemone).